Reading from the N-terminus, the 341-residue chain is MASADDRRFEVLRAIVADYVTTKEPIGSKALVDRHGLGVSSATVRNDMAVLEAEGYIAQPHTSSGRVPTEKGYREFVNRLEDVKPLSGAERKAILNFLEGGVDLDDVLRRAVRLLAQMTRQVAVVQYPTLSSSSVRHLEVVSLSPARLLLVVITDTGRVDQRIVELGDVINDEQLGRLRVLLGAALDGKKLSAASVAVAELAEQSDDDLRDPITRAATVLVETLVEHHEERLLLGGTANLTRNAADFGGQLRTVLEALEEQVVVLRLLAAQQEAGRVTVHIGHETAAEQMIGTSVVSTPYGAGGAVFGGMGVLGPTRMDYPGTIANVAAVAMYIGEVLANR.

Belongs to the HrcA family.

Its function is as follows. Negative regulator of class I heat shock genes (grpE-dnaK-dnaJ and groELS operons). Prevents heat-shock induction of these operons. The chain is Heat-inducible transcription repressor HrcA from Mycobacteroides abscessus (strain ATCC 19977 / DSM 44196 / CCUG 20993 / CIP 104536 / JCM 13569 / NCTC 13031 / TMC 1543 / L948) (Mycobacterium abscessus).